Here is a 623-residue protein sequence, read N- to C-terminus: Sterol O-acyltransferase 1 (623 aa).

The segment at 20–99 is disordered; that stretch reads NSAEPSKRHS…EQAEEKYPVD (80 aa). Low complexity predominate over residues 57 to 72; that stretch reads ATTTATGVAVAAAAAA. The segment covering 83-92 has biased composition (acidic residues); sequence DGDDEQDEQA. Transmembrane regions (helical) follow at residues 195–215, 242–262, 277–297, 384–404, and 422–442; these read LESNFSGIYVFAWMFMGWIAF, LFTIALLDLALFLSTFFVVFV, GFVAVSLFELCFIPVSFPVYV, ISCSNYFMFCMFPVLVYQINY, and IMGTIFLMMVTAQIFMHPVAM. The FYXDWWN motif motif lies at 504 to 510; it reads FYGDWWN. 2 consecutive transmembrane segments (helical) span residues 548-568 and 603-623; these read ATLFTFLLSAVFHEIAMFAIF and VVFTFGVCTGPSMIMTLYLTL. The active site involves His-560.

The protein belongs to the membrane-bound acyltransferase family. Sterol o-acyltransferase subfamily.

The protein resides in the endoplasmic reticulum membrane. Sterol O-acyltransferase that catalyzes the formation of stery esters. The chain is Sterol O-acyltransferase 1 (ARE1) from Saccharomyces uvarum (strain ATCC 76518 / CBS 7001 / CLIB 283 / NBRC 10550 / MCYC 623 / NCYC 2669 / NRRL Y-11845) (Yeast).